A 340-amino-acid polypeptide reads, in one-letter code: Beta-D-galactofuranosidase xynD (340 aa).

Positions 1–24 (MKHHNYYPSTCLSILPFLLPLTMS) are cleaved as a signal peptide. The Proton acceptor role is filled by D51. N-linked (GlcNAc...) asparagine glycosylation is found at N96 and N165. Catalysis depends on E222, which acts as the Proton donor. Residues N302 and N328 are each glycosylated (N-linked (GlcNAc...) asparagine).

The protein belongs to the glycosyl hydrolase 43 family.

Its subcellular location is the secreted. Its pathway is glycan degradation. Its function is as follows. Glycoside hydrolase family 43 beta-D-galactofuranosidase involved in the degradation of beta-galactofuranoside (Galf)-containing glycans such as galactomannan or O-glycans. Is not active on beta-1,5- or beta-1,6-linked beta-D-galactofuranose (Galf) residues. In Aspergillus niger (strain ATCC MYA-4892 / CBS 513.88 / FGSC A1513), this protein is Beta-D-galactofuranosidase xynD.